Consider the following 126-residue polypeptide: Basic phospholipase A2 1 (126 aa).

The propeptide occupies 1–7 (SNRPMPL). Disulfide bonds link Cys-18/Cys-78, Cys-33/Cys-125, Cys-35/Cys-51, Cys-50/Cys-106, Cys-57/Cys-99, Cys-67/Cys-92, and Cys-85/Cys-97. Residues Tyr-34, Gly-36, and Gly-38 each contribute to the Ca(2+) site. His-54 is an active-site residue. Ca(2+) is bound at residue Asp-55. Asp-100 is a catalytic residue.

This sequence belongs to the phospholipase A2 family. Group I subfamily. D49 sub-subfamily. In terms of assembly, heterodimer formed between two homologous isoforms: isoform 1 and isoform 2. Ca(2+) is required as a cofactor. Expressed by the venom gland.

The protein resides in the secreted. The catalysed reaction is a 1,2-diacyl-sn-glycero-3-phosphocholine + H2O = a 1-acyl-sn-glycero-3-phosphocholine + a fatty acid + H(+). PLA2 catalyzes the calcium-dependent hydrolysis of the 2-acyl groups in 3-sn-phosphoglycerides. This chain is Basic phospholipase A2 1, found in Naja sagittifera (Andaman cobra).